Reading from the N-terminus, the 168-residue chain is Nicotinamide-nucleotide adenylyltransferase (168 aa).

Belongs to the archaeal NMN adenylyltransferase family.

It is found in the cytoplasm. It catalyses the reaction beta-nicotinamide D-ribonucleotide + ATP + H(+) = diphosphate + NAD(+). It participates in cofactor biosynthesis; NAD(+) biosynthesis; NAD(+) from nicotinamide D-ribonucleotide: step 1/1. In Methanocorpusculum labreanum (strain ATCC 43576 / DSM 4855 / Z), this protein is Nicotinamide-nucleotide adenylyltransferase.